The chain runs to 216 residues: MSASTSPLIRQRGRESYEITYAAMRAFTDARTAQTADELWIVEHPPVFTLGLAADPTHVLDAHDIPVVQTDRGGEVTYHGPGQVVIYLLLDLRRNHADARIFARELVNKIEQAVIDTLAAYNLACERKAGAPGIYLSDGPLQGAKIAALGLKIRGNGCTYHGVSLNVAMDLTPFSWINPCGYEGLVTIDMQSLGAQTTLTAVQDTLAEKLTRHLSG.

The region spanning 33–216 is the BPL/LPL catalytic domain; that stretch reads AQTADELWIV…AEKLTRHLSG (184 aa). Substrate-binding positions include 72–79, 148–150, and 162–164; these read RGGEVTYH, ALG, and GVS. Cysteine 180 (acyl-thioester intermediate) is an active-site residue.

The protein belongs to the LipB family.

It localises to the cytoplasm. The enzyme catalyses octanoyl-[ACP] + L-lysyl-[protein] = N(6)-octanoyl-L-lysyl-[protein] + holo-[ACP] + H(+). It functions in the pathway protein modification; protein lipoylation via endogenous pathway; protein N(6)-(lipoyl)lysine from octanoyl-[acyl-carrier-protein]: step 1/2. Its function is as follows. Catalyzes the transfer of endogenously produced octanoic acid from octanoyl-acyl-carrier-protein onto the lipoyl domains of lipoate-dependent enzymes. Lipoyl-ACP can also act as a substrate although octanoyl-ACP is likely to be the physiological substrate. This Herminiimonas arsenicoxydans protein is Octanoyltransferase.